Reading from the N-terminus, the 579-residue chain is Basic helix-loop-helix ARNT-like protein 2 (579 aa).

Residues 1–198 (MEFPRKRRGR…SPREKPIDTK (198 aa)) form an interaction with PER2 region. Positions 4–9 (PRKRRG) match the Nuclear localization signal motif. A disordered region spans residues 40–61 (RTGVSAPSGIREAHSQMEKRRR). The region spanning 48 to 101 (GIREAHSQMEKRRRDKMNHLIQKLSSMIPPHIPTAHKLDKLSVLRRAVQYLRSL) is the bHLH domain. Residues 50–59 (REAHSQMEKR) are compositionally biased toward basic and acidic residues. Positions 118 to 128 (IQDKELSHLIL) match the Nuclear export signal 1 motif. Residues 119 to 190 (QDKELSHLIL…KEQLSCDGSP (72 aa)) enclose the PAS 1 domain. The span at 186–196 (CDGSPREKPID) shows a compositional bias: basic and acidic residues. The segment at 186–213 (CDGSPREKPIDTKTSQVYSHPYTGRPRM) is disordered. A Glycyl lysine isopeptide (Lys-Gly) (interchain with G-Cter in SUMO2 and SUMO3) cross-link involves residue K226. A Glycyl lysine isopeptide (Lys-Gly) (interchain with G-Cter in SUMO2) cross-link involves residue K233. The 71-residue stretch at 296 to 366 (VPQKSGKINV…DKHKAVLQSK (71 aa)) folds into the PAS 2 domain. Residues 331-339 (LGYLPQELL) carry the Nuclear export signal 2 motif. Residues 371–414 (TDSYKFRVKDGAFVTLKSEWFSFTNPWTKELEYIVSVNTLVLGR) enclose the PAC domain. The interval 469–536 (RLHSSSPEDA…AHPHGPLPGD (68 aa)) is disordered.

In terms of assembly, component of the circadian core oscillator, which includes the CRY proteins, CLOCK, or NPAS2, BMAL1 or BMAL2, CSNK1D and/or CSNK1E, TIMELESS and the PER proteins. Interacts directly with CLOCK to form the BMAL2-CLOCK transactivator. Can form heterodimers or homodimers which interact directly with CLOCK to form the transcription activator. Interacts with NPAS2 and HIF1A. Interacts with PER2. In terms of tissue distribution, expressed in the suprachiasmatic nucleus (SCN).

The protein localises to the nucleus. Its function is as follows. Transcriptional activator which forms a core component of the circadian clock. The circadian clock, an internal time-keeping system, regulates various physiological processes through the generation of approximately 24 hour circadian rhythms in gene expression, which are translated into rhythms in metabolism and behavior. It is derived from the Latin roots 'circa' (about) and 'diem' (day) and acts as an important regulator of a wide array of physiological functions including metabolism, sleep, body temperature, blood pressure, endocrine, immune, cardiovascular, and renal function. Consists of two major components: the central clock, residing in the suprachiasmatic nucleus (SCN) of the brain, and the peripheral clocks that are present in nearly every tissue and organ system. Both the central and peripheral clocks can be reset by environmental cues, also known as Zeitgebers (German for 'timegivers'). The predominant Zeitgeber for the central clock is light, which is sensed by retina and signals directly to the SCN. The central clock entrains the peripheral clocks through neuronal and hormonal signals, body temperature and feeding-related cues, aligning all clocks with the external light/dark cycle. Circadian rhythms allow an organism to achieve temporal homeostasis with its environment at the molecular level by regulating gene expression to create a peak of protein expression once every 24 hours to control when a particular physiological process is most active with respect to the solar day. Transcription and translation of core clock components (CLOCK, NPAS2, BMAL1, BMAL2, PER1, PER2, PER3, CRY1 and CRY2) plays a critical role in rhythm generation, whereas delays imposed by post-translational modifications (PTMs) are important for determining the period (tau) of the rhythms (tau refers to the period of a rhythm and is the length, in time, of one complete cycle). A diurnal rhythm is synchronized with the day/night cycle, while the ultradian and infradian rhythms have a period shorter and longer than 24 hours, respectively. Disruptions in the circadian rhythms contribute to the pathology of cardiovascular diseases, cancer, metabolic syndromes and aging. A transcription/translation feedback loop (TTFL) forms the core of the molecular circadian clock mechanism. Transcription factors, CLOCK or NPAS2 and BMAL1 or BMAL2, form the positive limb of the feedback loop, act in the form of a heterodimer and activate the transcription of core clock genes and clock-controlled genes (involved in key metabolic processes), harboring E-box elements (5'-CACGTG-3') within their promoters. The core clock genes: PER1/2/3 and CRY1/2 which are transcriptional repressors form the negative limb of the feedback loop and interact with the CLOCK|NPAS2-BMAL1|BMAL2 heterodimer inhibiting its activity and thereby negatively regulating their own expression. This heterodimer also activates nuclear receptors NR1D1/2 and RORA/B/G, which form a second feedback loop and which activate and repress BMAL1 transcription, respectively. The CLOCK-BMAL2 heterodimer activates the transcription of SERPINE1/PAI1 and BHLHE40/DEC1. The polypeptide is Basic helix-loop-helix ARNT-like protein 2 (Bmal2) (Mus musculus (Mouse)).